The sequence spans 374 residues: MPLFATPFAQLDLIRQPEQDGEPLQAFDAADEYLLNHLYERGVTAQSRILVLNDAFGALAASLAPHVQLTSSGDSHLGFLALRKNLARNGLDLGSVRFVPASETAVGPFDHVLVKVPKTLALLEEQLIRLHGQLAPGAQVVAAGMVKHLPRAAGDLLERYIGPMHASLAVKKARLLVAEAAERPAPRSPYPTRYRLEQPPLTLLNHANVFCREGLDIGTRAFLPHLPRSLGALRAADLGCGNGVLGIAYALLNPQAELTLVDESYMAVQSARENWRAALGERPAAFRADDGLAGQAAGSLDLVLCNPPFHQQQVVGDFLAWRMFLQARDALAAGGELWIVGNRHLGYHAKLKRLFRGVEQVAANPKFVILKAGK.

This sequence belongs to the methyltransferase superfamily. RlmG family.

It is found in the cytoplasm. It catalyses the reaction guanosine(1835) in 23S rRNA + S-adenosyl-L-methionine = N(2)-methylguanosine(1835) in 23S rRNA + S-adenosyl-L-homocysteine + H(+). Functionally, specifically methylates the guanine in position 1835 (m2G1835) of 23S rRNA. The protein is Ribosomal RNA large subunit methyltransferase G of Pseudomonas paraeruginosa (strain DSM 24068 / PA7) (Pseudomonas aeruginosa (strain PA7)).